A 128-amino-acid polypeptide reads, in one-letter code: Iron-sulfur cluster insertion protein ErpA (128 aa).

Iron-sulfur cluster contacts are provided by C56, C120, and C122.

It belongs to the HesB/IscA family. Homodimer. Iron-sulfur cluster is required as a cofactor.

Required for insertion of 4Fe-4S clusters for at least IspG. This is Iron-sulfur cluster insertion protein ErpA from Xanthomonas campestris pv. campestris (strain 8004).